Consider the following 159-residue polypeptide: MSYPITSPSQFVFLSSVWADPIELLNVCTNSLGNQFQTQQARTTVQKQFSEVWKPFPQSTVRFPGDVYKVYRYNAVLDPLITALLGTFDTRNSIIEVENRQSPTTAETLDATRRVDDATVAIRSAINNLVNELVRGTGLYNQNTFESMSGLVWTSAPAS.

Belongs to the virgaviridae capsid protein family.

It is found in the virion. Functionally, capsid protein self-assembles to form rod-shaped virions about 18 nm in diameter with a central canal enclosing the viral genomic RNA. The polypeptide is Capsid protein (CP) (Tomato mosaic virus (strain Kazakh K2) (ToMV)).